Consider the following 203-residue polypeptide: Large ribosomal subunit protein bL25 (203 aa).

This sequence belongs to the bacterial ribosomal protein bL25 family. CTC subfamily. Part of the 50S ribosomal subunit; part of the 5S rRNA/L5/L18/L25 subcomplex. Contacts the 5S rRNA. Binds to the 5S rRNA independently of L5 and L18.

Its function is as follows. This is one of the proteins that binds to the 5S RNA in the ribosome where it forms part of the central protuberance. In Cupriavidus pinatubonensis (strain JMP 134 / LMG 1197) (Cupriavidus necator (strain JMP 134)), this protein is Large ribosomal subunit protein bL25.